The chain runs to 215 residues: Riboflavin synthase (215 aa).

2 Lumazine-binding repeats span residues 1–96 and 97–193; these read MFTG…FGGH and FVSG…YRFL. 2,4-dihydroxypteridine-binding positions include 4 to 6, 47 to 49, 61 to 66, 100 to 102, Lys-135, 144 to 146, and 158 to 163; these read GIV, CLT, DVMPET, GHV, SST, and SVIPHT.

Homotrimer.

It carries out the reaction 2 6,7-dimethyl-8-(1-D-ribityl)lumazine + H(+) = 5-amino-6-(D-ribitylamino)uracil + riboflavin. It functions in the pathway cofactor biosynthesis; riboflavin biosynthesis; riboflavin from 2-hydroxy-3-oxobutyl phosphate and 5-amino-6-(D-ribitylamino)uracil: step 2/2. Its function is as follows. Catalyzes the dismutation of two molecules of 6,7-dimethyl-8-ribityllumazine, resulting in the formation of riboflavin and 5-amino-6-(D-ribitylamino)uracil. The sequence is that of Riboflavin synthase (ribE) from Bacillus amyloliquefaciens (Bacillus velezensis).